A 397-amino-acid chain; its full sequence is UPF0261 protein mlr3387 (397 aa).

The protein belongs to the UPF0261 family.

This Mesorhizobium japonicum (strain LMG 29417 / CECT 9101 / MAFF 303099) (Mesorhizobium loti (strain MAFF 303099)) protein is UPF0261 protein mlr3387.